The following is a 196-amino-acid chain: Glycerol-3-phosphate acyltransferase (196 aa).

4 consecutive transmembrane segments (helical) span residues 5-25 (GLIAFAFGYLLGSIPFGMILT), 70-90 (VVIALLLSGPGAAMAATLGAF), 111-131 (IGVLLGLFWPAALAFCAIWLL), and 152-172 (LLLWGFGHPQFALLFAVLTVL).

This sequence belongs to the PlsY family. Probably interacts with PlsX.

The protein resides in the cell inner membrane. The catalysed reaction is an acyl phosphate + sn-glycerol 3-phosphate = a 1-acyl-sn-glycero-3-phosphate + phosphate. Its pathway is lipid metabolism; phospholipid metabolism. In terms of biological role, catalyzes the transfer of an acyl group from acyl-phosphate (acyl-PO(4)) to glycerol-3-phosphate (G3P) to form lysophosphatidic acid (LPA). This enzyme utilizes acyl-phosphate as fatty acyl donor, but not acyl-CoA or acyl-ACP. The protein is Glycerol-3-phosphate acyltransferase of Nitrobacter winogradskyi (strain ATCC 25391 / DSM 10237 / CIP 104748 / NCIMB 11846 / Nb-255).